The primary structure comprises 190 residues: Calcium-binding protein NCS-1 (190 aa).

Glycine 2 is lipidated: N-myristoyl glycine. EF-hand domains lie at 40–58 (SGHL…FFPF), 60–95 (DPSA…TSRG), 96–131 (ELND…IYKM), and 144–179 (TPEK…DPTI). Positions 73, 75, 77, 79, 84, 109, 111, 113, 120, 157, 159, 161, 163, and 168 each coordinate Ca(2+).

It belongs to the recoverin family.

The protein resides in the membrane. Its function is as follows. Negatively regulates sporulation perhaps by controlling Ca(2+)-dependent desensitization of git3. In Schizosaccharomyces pombe (strain 972 / ATCC 24843) (Fission yeast), this protein is Calcium-binding protein NCS-1 (ncs1).